Consider the following 420-residue polypeptide: Gamma-glutamyl phosphate reductase (420 aa).

It belongs to the gamma-glutamyl phosphate reductase family.

The protein resides in the cytoplasm. The catalysed reaction is L-glutamate 5-semialdehyde + phosphate + NADP(+) = L-glutamyl 5-phosphate + NADPH + H(+). Its pathway is amino-acid biosynthesis; L-proline biosynthesis; L-glutamate 5-semialdehyde from L-glutamate: step 2/2. Functionally, catalyzes the NADPH-dependent reduction of L-glutamate 5-phosphate into L-glutamate 5-semialdehyde and phosphate. The product spontaneously undergoes cyclization to form 1-pyrroline-5-carboxylate. In Cereibacter sphaeroides (strain KD131 / KCTC 12085) (Rhodobacter sphaeroides), this protein is Gamma-glutamyl phosphate reductase.